Here is a 338-residue protein sequence, read N- to C-terminus: CRISPR-associated endonuclease Cas1 (338 aa).

Positions 165, 230, and 245 each coordinate Mn(2+).

This sequence belongs to the CRISPR-associated endonuclease Cas1 family. Homodimer, forms a heterotetramer with a Cas2 homodimer. Requires Mg(2+) as cofactor. It depends on Mn(2+) as a cofactor.

CRISPR (clustered regularly interspaced short palindromic repeat), is an adaptive immune system that provides protection against mobile genetic elements (viruses, transposable elements and conjugative plasmids). CRISPR clusters contain spacers, sequences complementary to antecedent mobile elements, and target invading nucleic acids. CRISPR clusters are transcribed and processed into CRISPR RNA (crRNA). Acts as a dsDNA endonuclease. Involved in the integration of spacer DNA into the CRISPR cassette. The chain is CRISPR-associated endonuclease Cas1 from Fusobacterium nucleatum subsp. nucleatum (strain ATCC 25586 / DSM 15643 / BCRC 10681 / CIP 101130 / JCM 8532 / KCTC 2640 / LMG 13131 / VPI 4355).